Reading from the N-terminus, the 466-residue chain is Purple acid phosphatase 25 (466 aa).

Positions methionine 1–serine 21 are cleaved as a signal peptide. Aspartate 164 is a binding site for Fe cation. Asparagine 172 carries an N-linked (GlcNAc...) asparagine glycan. The Fe cation site is built by aspartate 192 and tyrosine 195. Aspartate 192 provides a ligand contact to Zn(2+). Positions 229 and 314 each coordinate Zn(2+). Asparagine 229 provides a ligand contact to substrate. Residue histidine 324 is the Proton donor of the active site. Histidine 351 is a binding site for Zn(2+). Substrate is bound at residue histidine 351 to histidine 353. Fe cation is bound at residue histidine 353. Residues asparagine 367 and asparagine 424 are each glycosylated (N-linked (GlcNAc...) asparagine).

Belongs to the metallophosphoesterase superfamily. Purple acid phosphatase family. In terms of assembly, homodimer. The cofactor is Fe cation. Requires Zn(2+) as cofactor. In terms of tissue distribution, specifically expressed in flowers.

Its subcellular location is the secreted. The catalysed reaction is a phosphate monoester + H2O = an alcohol + phosphate. In Arabidopsis thaliana (Mouse-ear cress), this protein is Purple acid phosphatase 25 (PAP25).